Here is a 152-residue protein sequence, read N- to C-terminus: Aspartate carbamoyltransferase regulatory chain (152 aa).

Positions 108, 113, 137, and 140 each coordinate Zn(2+).

The protein belongs to the PyrI family. In terms of assembly, contains catalytic and regulatory chains. Zn(2+) is required as a cofactor.

Functionally, involved in allosteric regulation of aspartate carbamoyltransferase. In Neisseria gonorrhoeae (strain ATCC 700825 / FA 1090), this protein is Aspartate carbamoyltransferase regulatory chain.